Reading from the N-terminus, the 90-residue chain is Defensin-like protein 178 (90 aa).

A signal peptide spans 1 to 23; it reads MAKATSSLVVPIIFLVIFALVEQ. 4 disulfides stabilise this stretch: C27–C66, C36–C55, C39–C60, and C43–C62.

The protein belongs to the DEFL family.

It localises to the secreted. This Arabidopsis thaliana (Mouse-ear cress) protein is Defensin-like protein 178 (LCR64).